The primary structure comprises 1193 residues: Pyruvate carboxylase (1193 aa).

The Biotin carboxylation domain occupies 41-493; sequence QFQKILVANR…WTTFIDDTPE (453 aa). ATP contacts are provided by Lys159, Glu243, and His278. The 198-residue stretch at 163–360 folds into the ATP-grasp domain; the sequence is RQLAIRCNVP…IVAAQIQIAA (198 aa). Arg335 is an active-site residue. The Pyruvate carboxyltransferase domain maps to 579–847; the sequence is CLIMDTTWRD…DPGLNSAHVR (269 aa). Substrate-binding positions include 587-591 and Arg660; that span reads RDAHQ. Asp588 provides a ligand contact to a divalent metal cation. A divalent metal cation-binding residues include Lys756, His786, and His788. An N6-carboxylysine modification is found at Lys756. Thr921 lines the substrate pocket. The Biotinyl-binding domain occupies 1116–1191; it reads KADVGDSSQV…DGQDLVCKIT (76 aa). Position 1157 is an N6-biotinyllysine (Lys1157).

The cofactor is biotin. It depends on Zn(2+) as a cofactor.

It is found in the cytoplasm. It carries out the reaction hydrogencarbonate + pyruvate + ATP = oxaloacetate + ADP + phosphate + H(+). Its pathway is carbohydrate biosynthesis; gluconeogenesis. Its function is as follows. Pyruvate carboxylase catalyzes a 2-step reaction, involving the ATP-dependent carboxylation of the covalently attached biotin in the first step and the transfer of the carboxyl group to pyruvate in the second. The chain is Pyruvate carboxylase (pyc) from Aspergillus terreus.